The following is a 548-amino-acid chain: Glucan 1,4-alpha-maltotetraohydrolase (548 aa).

The signal sequence occupies residues 1-21 (MSHILRAAVLAAMLLPLPSMA). The Ca(2+) site is built by Asp22, Gln23, His34, Asp37, and Glu38. A substrate-binding site is contributed by 99 to 100 (YF). Asn137 is a binding site for Ca(2+). His138 lines the substrate pocket. Cys161 and Cys171 form a disulfide bridge. Positions 172 and 175 each coordinate Ca(2+). A substrate-binding site is contributed by 177 to 181 (FIGGD). Asp183 is a binding site for Ca(2+). Residue Arg212 coordinates substrate. The active-site Nucleophile is the Asp214. 217-218 (RG) is a binding site for substrate. Gly218 provides a ligand contact to Ca(2+). A disulfide bond links Cys237 and Cys272. The active-site Proton donor is the Glu240. Positions 314 and 326 each coordinate substrate. Residues 446 to 548 (GEPGALVSVS…SEGATTVGRL (103 aa)) enclose the CBM20 domain. The segment covering 529–542 (QGGANNSLTPSEGA) has biased composition (polar residues). The disordered stretch occupies residues 529 to 548 (QGGANNSLTPSEGATTVGRL).

This sequence belongs to the glycosyl hydrolase 13 family. As to quaternary structure, monomer. Requires Ca(2+) as cofactor.

It is found in the secreted. The enzyme catalyses Hydrolysis of (1-&gt;4)-alpha-D-glucosidic linkages in amylaceous polysaccharides, to remove successive maltotetraose residues from the non-reducing chain ends.. It functions in the pathway glycan degradation; starch degradation. This is Glucan 1,4-alpha-maltotetraohydrolase (amyP) from Stutzerimonas stutzeri (Pseudomonas stutzeri).